We begin with the raw amino-acid sequence, 485 residues long: N-succinylglutamate 5-semialdehyde dehydrogenase (485 aa).

220 to 225 (GSANTG) contacts NAD(+). Residues Glu-243 and Cys-278 contribute to the active site.

Belongs to the aldehyde dehydrogenase family. AstD subfamily.

It carries out the reaction N-succinyl-L-glutamate 5-semialdehyde + NAD(+) + H2O = N-succinyl-L-glutamate + NADH + 2 H(+). Its pathway is amino-acid degradation; L-arginine degradation via AST pathway; L-glutamate and succinate from L-arginine: step 4/5. In terms of biological role, catalyzes the NAD-dependent reduction of succinylglutamate semialdehyde into succinylglutamate. In Vibrio atlanticus (strain LGP32) (Vibrio splendidus (strain Mel32)), this protein is N-succinylglutamate 5-semialdehyde dehydrogenase.